Reading from the N-terminus, the 544-residue chain is CTP synthase (544 aa).

The segment at 1-265 (MTKFIFVTGG…DNIITEQLQL (265 aa)) is amidoligase domain. Position 13 (S13) interacts with CTP. Position 13 (S13) interacts with UTP. ATP-binding positions include 14 to 19 (SLGKGI) and D71. Mg(2+) is bound by residues D71 and E139. Residues 146–148 (DIE), 186–191 (KTKPTQ), and K222 each bind CTP. Residues 186–191 (KTKPTQ) and K222 each bind UTP. Residues 290 to 544 (KIAMVGKYVD…VKAALNNKKA (255 aa)) form the Glutamine amidotransferase type-1 domain. G353 contacts L-glutamine. C380 functions as the Nucleophile; for glutamine hydrolysis in the catalytic mechanism. Residues 381–384 (LGMQ), E404, and R471 contribute to the L-glutamine site. Active-site residues include H517 and E519.

It belongs to the CTP synthase family. In terms of assembly, homotetramer.

It carries out the reaction UTP + L-glutamine + ATP + H2O = CTP + L-glutamate + ADP + phosphate + 2 H(+). The catalysed reaction is L-glutamine + H2O = L-glutamate + NH4(+). The enzyme catalyses UTP + NH4(+) + ATP = CTP + ADP + phosphate + 2 H(+). The protein operates within pyrimidine metabolism; CTP biosynthesis via de novo pathway; CTP from UDP: step 2/2. Its activity is regulated as follows. Allosterically activated by GTP, when glutamine is the substrate; GTP has no effect on the reaction when ammonia is the substrate. The allosteric effector GTP functions by stabilizing the protein conformation that binds the tetrahedral intermediate(s) formed during glutamine hydrolysis. Inhibited by the product CTP, via allosteric rather than competitive inhibition. Catalyzes the ATP-dependent amination of UTP to CTP with either L-glutamine or ammonia as the source of nitrogen. Regulates intracellular CTP levels through interactions with the four ribonucleotide triphosphates. The protein is CTP synthase of Neisseria meningitidis serogroup C / serotype 2a (strain ATCC 700532 / DSM 15464 / FAM18).